Here is a 248-residue protein sequence, read N- to C-terminus: 14-3-3 protein zeta (248 aa).

Belongs to the 14-3-3 family. In terms of assembly, homodimer; homodimerization is not essential for modulating the activity of Slo. Interacts with phosphorylated Slob; the interaction with Slob mediates an indirect interaction with Slo. Interacts with phosphorylated yki. Interacts with hemo; this represses 14-3-3zeta activity which prevents the 14-3-3zeta-mediated activation of phosphoinositide 3-kinase Pi3K68D. This, in turn, inhibits the Pi3K68D-mediated conversion of phosphatidylinositol to phosphatidylinositol-3-phosphate and prevents progression of early endosomes through the maturation process which regulates subsequent steps of phagocytic processing. Interacts with REPTOR (when phosphorylated), this interaction may assist the cytoplasmic retention of REPTOR. In terms of tissue distribution, predominantly expressed in the ventral nerve cord of the embryo, and in the neural tissues of the head. Also found in the region posterior to the morphogenetic furrow of the eye imaginal disk where cells differentiate as photoreceptors.

Its subcellular location is the cytoplasm. It is found in the early endosome. Functionally, required in Raf-dependent cell proliferation and photoreceptor differentiation during eye development. Acts upstream of Raf and downstream of Ras, and is essential for viability. Acts as a negative regulator of the slo calcium channel via its interaction with slo-binding protein slob. Inhibits yki activity by restricting its nuclear localization. Binds to and promotes the activity of phosphoinositide 3-kinase Pi3K68D which converts phosphatidylinositol to phosphatidylinositol-3-phosphate and promotes maturation of early endosomes. In Drosophila melanogaster (Fruit fly), this protein is 14-3-3 protein zeta (14-3-3zeta).